The chain runs to 436 residues: T-box transcription factor TBX6 (436 aa).

Positions 100-273 (LWKEFSAVGT…ANPFAKGFRE (174 aa)) form a DNA-binding region, T-box. Residues 274–284 (NGRNCKRERDA) are compositionally biased toward basic and acidic residues. Disordered regions lie at residues 274–344 (NGRN…CGGP) and 360–383 (PSHL…APYS). Over residues 332–344 (EAASASAPPCGGP) the composition is skewed to low complexity.

Its subcellular location is the nucleus. T-box transcription factor that plays an essential role in the determination of the fate of axial stem cells: neural vs mesodermal. Acts in part by down-regulating, a specific enhancer (N1) of SOX2, to inhibit neural development. Seems to play also an essential role in left/right axis determination and acts through effects on Notch signaling around the node as well as through an effect on the morphology and motility of the nodal cilia. This is T-box transcription factor TBX6 (Tbx6) from Mus musculus (Mouse).